The following is a 176-amino-acid chain: Lipoprotein signal peptidase (176 aa).

The next 3 membrane-spanning stretches (helical) occupy residues 12–32, 67–87, and 94–116; these read WYWMVVLVFIADQLSKQWVLA, WQRWFFTFVAVGFSTLLTIWL, and MWRLNLAYTLVIGGALGNLIDRL. Catalysis depends on residues aspartate 123 and aspartate 141. The helical transmembrane segment at 137–157 threads the bilayer; that stretch reads FNIADSAICVGAALIIIDSII.

It belongs to the peptidase A8 family.

It localises to the cell inner membrane. The catalysed reaction is Release of signal peptides from bacterial membrane prolipoproteins. Hydrolyzes -Xaa-Yaa-Zaa-|-(S,diacylglyceryl)Cys-, in which Xaa is hydrophobic (preferably Leu), and Yaa (Ala or Ser) and Zaa (Gly or Ala) have small, neutral side chains.. It participates in protein modification; lipoprotein biosynthesis (signal peptide cleavage). This protein specifically catalyzes the removal of signal peptides from prolipoproteins. The chain is Lipoprotein signal peptidase from Shewanella woodyi (strain ATCC 51908 / MS32).